Consider the following 80-residue polypeptide: Cell division topological specificity factor (80 aa).

This sequence belongs to the MinE family.

Prevents the cell division inhibition by proteins MinC and MinD at internal division sites while permitting inhibition at polar sites. This ensures cell division at the proper site by restricting the formation of a division septum at the midpoint of the long axis of the cell. The polypeptide is Cell division topological specificity factor (Wolinella succinogenes (strain ATCC 29543 / DSM 1740 / CCUG 13145 / JCM 31913 / LMG 7466 / NCTC 11488 / FDC 602W) (Vibrio succinogenes)).